Here is a 232-residue protein sequence, read N- to C-terminus: Octanoyltransferase (232 aa).

Residues 43–231 enclose the BPL/LPL catalytic domain; sequence LPTSNYLLFV…HLTHLFEAEI (189 aa). Substrate contacts are provided by residues 88 to 95, 160 to 162, and 173 to 175; these read RGGDITYH, AMG, and GFA. Catalysis depends on C191, which acts as the Acyl-thioester intermediate.

This sequence belongs to the LipB family.

It is found in the cytoplasm. It carries out the reaction octanoyl-[ACP] + L-lysyl-[protein] = N(6)-octanoyl-L-lysyl-[protein] + holo-[ACP] + H(+). The protein operates within protein modification; protein lipoylation via endogenous pathway; protein N(6)-(lipoyl)lysine from octanoyl-[acyl-carrier-protein]: step 1/2. Functionally, catalyzes the transfer of endogenously produced octanoic acid from octanoyl-acyl-carrier-protein onto the lipoyl domains of lipoate-dependent enzymes. Lipoyl-ACP can also act as a substrate although octanoyl-ACP is likely to be the physiological substrate. In Flavobacterium johnsoniae (strain ATCC 17061 / DSM 2064 / JCM 8514 / BCRC 14874 / CCUG 350202 / NBRC 14942 / NCIMB 11054 / UW101) (Cytophaga johnsonae), this protein is Octanoyltransferase.